A 181-amino-acid polypeptide reads, in one-letter code: Adenine phosphoribosyltransferase (181 aa).

This sequence belongs to the purine/pyrimidine phosphoribosyltransferase family. In terms of assembly, homodimer.

Its subcellular location is the cytoplasm. The enzyme catalyses AMP + diphosphate = 5-phospho-alpha-D-ribose 1-diphosphate + adenine. It participates in purine metabolism; AMP biosynthesis via salvage pathway; AMP from adenine: step 1/1. Catalyzes a salvage reaction resulting in the formation of AMP, that is energically less costly than de novo synthesis. In Methylobacterium sp. (strain 4-46), this protein is Adenine phosphoribosyltransferase.